Reading from the N-terminus, the 26-residue chain is MGDCGCSGASSCNCGSGCSCSNCGSK.

The segment covering Met-1 to Cys-14 has biased composition (low complexity). A disordered region spans residues Met-1–Lys-26. Residues Cys-4, Cys-6, Cys-12, Cys-14, Cys-18, Cys-20, and Cys-23 each coordinate Cu(+). Residues Gly-15–Lys-26 show a composition bias toward cys residues.

Belongs to the metallothionein superfamily. Type 8 family.

The sequence is that of Metallothionein (cmt) from Neurospora crassa (strain ATCC 24698 / 74-OR23-1A / CBS 708.71 / DSM 1257 / FGSC 987).